The following is a 448-amino-acid chain: Mitochondrial distribution and morphology protein 10 (448 aa).

It belongs to the MDM10 family. Component of the ER-mitochondria encounter structure (ERMES) or MDM complex, composed of MMM1, MDM10, MDM12 and MDM34. Associates with the mitochondrial outer membrane sorting assembly machinery SAM(core) complex.

The protein resides in the mitochondrion outer membrane. Component of the ERMES/MDM complex, which serves as a molecular tether to connect the endoplasmic reticulum and mitochondria. Components of this complex are involved in the control of mitochondrial shape and protein biogenesis and may function in phospholipid exchange. MDM10 is involved in the late assembly steps of the general translocase of the mitochondrial outer membrane (TOM complex). Functions in the TOM40-specific route of the assembly of outer membrane beta-barrel proteins, including the association of TOM40 with the receptor TOM22 and small TOM proteins. Can associate with the SAM(core) complex as well as the MDM12-MMM1 complex, both involved in late steps of the major beta-barrel assembly pathway, that is responsible for biogenesis of all outer membrane beta-barrel proteins. May act as a switch that shuttles between both complexes and channels precursor proteins into the TOM40-specific pathway. Plays a role in mitochondrial morphology and in the inheritance of mitochondria. The sequence is that of Mitochondrial distribution and morphology protein 10 from Podospora anserina (strain S / ATCC MYA-4624 / DSM 980 / FGSC 10383) (Pleurage anserina).